The following is a 199-amino-acid chain: dITP/XTP pyrophosphatase (199 aa).

Substrate is bound at residue 7–12 (TTNLHK). Residues Glu41 and Asp70 each contribute to the Mg(2+) site. Asp70 functions as the Proton acceptor in the catalytic mechanism. Residues Ser71, 154 to 157 (FGYD), Lys177, and 182 to 183 (HR) each bind substrate.

It belongs to the HAM1 NTPase family. Homodimer. The cofactor is Mg(2+).

It catalyses the reaction XTP + H2O = XMP + diphosphate + H(+). The catalysed reaction is dITP + H2O = dIMP + diphosphate + H(+). The enzyme catalyses ITP + H2O = IMP + diphosphate + H(+). In terms of biological role, pyrophosphatase that catalyzes the hydrolysis of nucleoside triphosphates to their monophosphate derivatives, with a high preference for the non-canonical purine nucleotides XTP (xanthosine triphosphate), dITP (deoxyinosine triphosphate) and ITP. Seems to function as a house-cleaning enzyme that removes non-canonical purine nucleotides from the nucleotide pool, thus preventing their incorporation into DNA/RNA and avoiding chromosomal lesions. The sequence is that of dITP/XTP pyrophosphatase from Protochlamydia amoebophila (strain UWE25).